Here is a 936-residue protein sequence, read N- to C-terminus: Lipoxygenase 2.1, chloroplastic (936 aa).

A disordered region spans residues Met1 to Val69. Residues Ser47 to Thr59 are compositionally biased toward low complexity. One can recognise a PLAT domain in the interval Met88 to Pro217. A Lipoxygenase domain is found at Ser220–Ile936. A disordered region spans residues Leu264–His308. Basic residues predominate over residues Pro287–Ser297. The segment covering Lys298–His308 has biased composition (basic and acidic residues). His587, His592, His777, Asn781, and Ile936 together coordinate Fe cation.

Belongs to the lipoxygenase family. It depends on Fe cation as a cofactor. The N-terminus is blocked.

It is found in the plastid. The protein resides in the chloroplast. It carries out the reaction (9Z,12Z)-octadecadienoate + O2 = (13S)-hydroperoxy-(9Z,11E)-octadecadienoate. It catalyses the reaction (9Z,12Z,15Z)-octadecatrienoate + O2 = (13S)-hydroperoxy-(9Z,11E,15Z)-octadecatrienoate. It participates in lipid metabolism; oxylipin biosynthesis. Its function is as follows. Plant lipoxygenase may be involved in a number of diverse aspects of plant physiology including growth and development, pest resistance, and senescence or responses to wounding. This enzyme is possibly involved in jasmonic acid synthesis. It exhibits linoleate 13-lipoxygenase and arachidonate 15-lipoxygenase activity. In Hordeum vulgare (Barley), this protein is Lipoxygenase 2.1, chloroplastic (LOX2.1).